The chain runs to 102 residues: NADH-quinone oxidoreductase subunit K (102 aa).

Transmembrane regions (helical) follow at residues Leu6 to Val26, Leu30 to Leu50, and Val62 to Val82.

It belongs to the complex I subunit 4L family. NDH-1 is composed of 14 different subunits. Subunits NuoA, H, J, K, L, M, N constitute the membrane sector of the complex.

The protein localises to the cell inner membrane. The enzyme catalyses a quinone + NADH + 5 H(+)(in) = a quinol + NAD(+) + 4 H(+)(out). NDH-1 shuttles electrons from NADH, via FMN and iron-sulfur (Fe-S) centers, to quinones in the respiratory chain. The immediate electron acceptor for the enzyme in this species is believed to be ubiquinone. Couples the redox reaction to proton translocation (for every two electrons transferred, four hydrogen ions are translocated across the cytoplasmic membrane), and thus conserves the redox energy in a proton gradient. In Acinetobacter baumannii (strain AB307-0294), this protein is NADH-quinone oxidoreductase subunit K.